The following is a 108-amino-acid chain: Nascent polypeptide-associated complex protein (108 aa).

The NAC-A/B domain maps to 1 to 68 (MNPREIRRMM…LREVKKEVEQ (68 aa)).

Belongs to the NAC-alpha family. In terms of assembly, homodimer. Interacts with the ribosome. Binds ribosomal RNA.

Its function is as follows. Contacts the emerging nascent chain on the ribosome. This chain is Nascent polypeptide-associated complex protein, found in Picrophilus torridus (strain ATCC 700027 / DSM 9790 / JCM 10055 / NBRC 100828 / KAW 2/3).